Here is a 270-residue protein sequence, read N- to C-terminus: MKSLFKVTLLATTMAVALHAPITFAAEAAKPATTADSKAAFKNDDQKSAYALGASLGRYMENSLKEQEKLGIKLDKDQLIAGVQDAFADKSKLSDQEIEQTLQAFEARVKSSAQAKMEKDAADNEAKGKEYREKFAKEKGVKTSSTGLVYQVVEAGKGEAPKDSDTVVVNYKGTLIDGKEFDNSYTRGEPLSFRLDGVIPGWTEGLKNIKKGGKIKLVIPPELAYGKAGVPGIPPNSTLVFDVELLDVKPAPKADAKPEADAKAADSAKK.

The N-terminal stretch at 1-25 (MKSLFKVTLLATTMAVALHAPITFA) is a signal peptide. The region spanning 164-249 (SDTVVVNYKG…VFDVELLDVK (86 aa)) is the PPIase FKBP-type domain.

The protein belongs to the FKBP-type PPIase family.

Its subcellular location is the periplasm. It carries out the reaction [protein]-peptidylproline (omega=180) = [protein]-peptidylproline (omega=0). Functionally, PPIases accelerate the folding of proteins. It catalyzes the cis-trans isomerization of proline imidic peptide bonds in oligopeptides. This chain is FKBP-type peptidyl-prolyl cis-trans isomerase FkpA (fkpA), found in Escherichia coli O157:H7.